A 542-amino-acid polypeptide reads, in one-letter code: Protein XP55 (542 aa).

The N-terminal stretch at 1–33 is a signal peptide; sequence MTARRTRWTRRTDRSLPIRSAAAAVAFAAGATA. The N-palmitoyl cysteine moiety is linked to residue Cys34. Cys34 is lipidated: S-diacylglycerol cysteine. Positions 519 to 542 are disordered; the sequence is LEGRTNTASPAGPGGTSRTGGRKK.

The protein belongs to the bacterial solute-binding protein 5 family.

The protein localises to the cell membrane. In terms of biological role, required for transport of an unidentified substrate. The chain is Protein XP55 (xp55) from Streptomyces lividans.